We begin with the raw amino-acid sequence, 1517 residues long: DNA-directed RNA polymerase subunit beta' (1517 aa).

Zn(2+)-binding residues include cysteine 71, cysteine 73, cysteine 86, and cysteine 89. Mg(2+) contacts are provided by aspartate 482, aspartate 484, and aspartate 486. Zn(2+) is bound by residues cysteine 812, cysteine 886, cysteine 893, and cysteine 896.

It belongs to the RNA polymerase beta' chain family. The RNAP catalytic core consists of 2 alpha, 1 beta, 1 beta' and 1 omega subunit. When a sigma factor is associated with the core the holoenzyme is formed, which can initiate transcription. It depends on Mg(2+) as a cofactor. Requires Zn(2+) as cofactor.

The enzyme catalyses RNA(n) + a ribonucleoside 5'-triphosphate = RNA(n+1) + diphosphate. In terms of biological role, DNA-dependent RNA polymerase catalyzes the transcription of DNA into RNA using the four ribonucleoside triphosphates as substrates. This chain is DNA-directed RNA polymerase subunit beta', found in Campylobacter jejuni (strain RM1221).